The following is a 387-amino-acid chain: Diphthine methyltransferase (387 aa).

WD repeat units lie at residues 62–102, 119–159, 195–237, 241–286, and 357–387; these read NTYG…KDDF, EKDV…VQFT, PHEL…FIWS, IHDA…ESIF, and GHDS…TWIV.

This sequence belongs to the DPH7 family. In terms of assembly, interacts with CAN1 and RTT10.

The protein resides in the cytoplasm. It is found in the endosome. It carries out the reaction diphthine methyl ester-[translation elongation factor 2] + H2O = diphthine-[translation elongation factor 2] + methanol + H(+). It functions in the pathway protein modification; peptidyl-diphthamide biosynthesis. Functionally, catalyzes the demethylation of diphthine methyl ester to form diphthine, an intermediate in diphthamide biosynthesis, a post-translational modification of histidine which occurs in translation elongation factor 2 (EFT1 and EFT2). Also plays a role in the regulation of the retromer complex and is required for the recycling from endosomes of plasma membrane proteins like CAN1 and MUP1. Identified in a screen for mutants with decreased levels of rDNA transcription. The protein is Diphthine methyltransferase (RRT2) of Saccharomyces cerevisiae (strain ATCC 204508 / S288c) (Baker's yeast).